We begin with the raw amino-acid sequence, 419 residues long: Ribosomal RNA large subunit methyltransferase G (419 aa).

The span at 386 to 408 (KAEPFETHPTEAEAKVEVTESKP) shows a compositional bias: basic and acidic residues. A disordered region spans residues 386-419 (KAEPFETHPTEAEAKVEVTESKPHPQSSLYGTKK). Over residues 409 to 419 (HPQSSLYGTKK) the composition is skewed to polar residues.

The protein belongs to the methyltransferase superfamily. RlmG family.

It is found in the cytoplasm. The catalysed reaction is guanosine(1835) in 23S rRNA + S-adenosyl-L-methionine = N(2)-methylguanosine(1835) in 23S rRNA + S-adenosyl-L-homocysteine + H(+). Functionally, specifically methylates the guanine in position 1835 (m2G1835) of 23S rRNA. The sequence is that of Ribosomal RNA large subunit methyltransferase G from Shewanella woodyi (strain ATCC 51908 / MS32).